The sequence spans 110 residues: Parvalbumin alpha (110 aa).

EF-hand domains are found at residues 39–74 and 78–110; these read KGPDVMKQVFGILDQDRSGFIEEDELCLMLKGFTPN and LSVKETTALLAAGDKDGDGKIGMDEFVTLVSES. 11 residues coordinate Ca(2+): Asp52, Asp54, Ser56, Phe58, Glu60, Glu63, Asp91, Asp93, Asp95, Lys97, and Glu102.

It belongs to the parvalbumin family.

Its function is as follows. In muscle, parvalbumin is thought to be involved in relaxation after contraction. It binds two calcium ions. This Aquarana catesbeiana (American bullfrog) protein is Parvalbumin alpha.